A 392-amino-acid polypeptide reads, in one-letter code: Phosphoglycerate kinase (392 aa).

Residues 21–23 (DMN), Arg36, 59–62 (HLGR), Arg114, and Arg147 each bind substrate. ATP-binding positions include Lys198, Glu320, and 346–349 (GGDT).

Belongs to the phosphoglycerate kinase family. As to quaternary structure, monomer.

The protein localises to the cytoplasm. It carries out the reaction (2R)-3-phosphoglycerate + ATP = (2R)-3-phospho-glyceroyl phosphate + ADP. It participates in carbohydrate degradation; glycolysis; pyruvate from D-glyceraldehyde 3-phosphate: step 2/5. The sequence is that of Phosphoglycerate kinase from Neisseria meningitidis serogroup C (strain 053442).